We begin with the raw amino-acid sequence, 429 residues long: Serine hydroxymethyltransferase (429 aa).

Residues L126 and 130-132 (GHL) each bind (6S)-5,6,7,8-tetrahydrofolate. At K235 the chain carries N6-(pyridoxal phosphate)lysine.

Belongs to the SHMT family. In terms of assembly, homodimer. The cofactor is pyridoxal 5'-phosphate.

It localises to the cytoplasm. The catalysed reaction is (6R)-5,10-methylene-5,6,7,8-tetrahydrofolate + glycine + H2O = (6S)-5,6,7,8-tetrahydrofolate + L-serine. Its pathway is one-carbon metabolism; tetrahydrofolate interconversion. The protein operates within amino-acid biosynthesis; glycine biosynthesis; glycine from L-serine: step 1/1. Catalyzes the reversible interconversion of serine and glycine with tetrahydrofolate (THF) serving as the one-carbon carrier. This reaction serves as the major source of one-carbon groups required for the biosynthesis of purines, thymidylate, methionine, and other important biomolecules. Also exhibits THF-independent aldolase activity toward beta-hydroxyamino acids, producing glycine and aldehydes, via a retro-aldol mechanism. This Zymomonas mobilis subsp. mobilis (strain ATCC 31821 / ZM4 / CP4) protein is Serine hydroxymethyltransferase.